The sequence spans 50 residues: Bacteriocin-like protein SboX (50 aa).

The chain is Bacteriocin-like protein SboX (sboX) from Bacillus subtilis (strain 168).